The primary structure comprises 275 residues: NAC domain-containing protein 2 (275 aa).

The NAC domain occupies 10-162; the sequence is LPPGFRFHPT…DWVLCRIYKK (153 aa). A DNA-binding region spans residues 107 to 168; sequence VGIKKALVFY…IYKKKNLERA (62 aa).

In terms of tissue distribution, expressed in roots, stem, flowers, and leaves.

Its subcellular location is the nucleus. In terms of biological role, transcription factor that binds DNA motifs 5'-CGT[AG](5N)NACG[ACT][AC][AT][ACG][ACT]-3' and 5'-CACG[ACT][AC][AT][AGT][CT]-3' in target genes promoters. Promotes leaf senescence (developmental, light-induced and ABA-induced senescence) and regulates fruit yield and sugar content, probably by establishing abscisic acid (ABA) homeostasis. Activates the expression of senescence and ABA associated genes including NCED1, ABCG40, CYP707A2, SAG113, SGR1 and PAO, by directly binding to their promoters. In Solanum lycopersicum (Tomato), this protein is NAC domain-containing protein 2.